We begin with the raw amino-acid sequence, 412 residues long: Thyroxine-binding globulin (412 aa).

Positions 1–16 are cleaved as a signal peptide; the sequence is MPLFLYMVLLVLGIHC. N-linked (GlcNAc...) asparagine glycans are attached at residues N20, N35, N98, N164, and N252. Residues N292 and K395 each coordinate thyroxine.

The protein belongs to the serpin family. Expressed by the liver and secreted in plasma.

The protein localises to the secreted. Major thyroid hormone transport protein in serum. This chain is Thyroxine-binding globulin (SERPINA7), found in Sus scrofa (Pig).